Consider the following 280-residue polypeptide: Large ribosomal subunit protein uL2 (280 aa).

2 disordered regions span residues 33-55 and 224-266; these read LTEGLTKSGGRNNTGRITSRRRG and AMNP…KASQ. Basic residues predominate over residues 256–266; the sequence is TRTRNKNKASQ.

The protein belongs to the universal ribosomal protein uL2 family. Part of the 50S ribosomal subunit. Forms a bridge to the 30S subunit in the 70S ribosome.

Functionally, one of the primary rRNA binding proteins. Required for association of the 30S and 50S subunits to form the 70S ribosome, for tRNA binding and peptide bond formation. It has been suggested to have peptidyltransferase activity; this is somewhat controversial. Makes several contacts with the 16S rRNA in the 70S ribosome. The polypeptide is Large ribosomal subunit protein uL2 (Ruegeria pomeroyi (strain ATCC 700808 / DSM 15171 / DSS-3) (Silicibacter pomeroyi)).